Reading from the N-terminus, the 652-residue chain is DNA polymerase epsilon subunit B (652 aa).

This sequence belongs to the DNA polymerase epsilon subunit B family. Heterotetramer. Consists of four subunits: POL2, DPB2, DPB3 and DPB4.

Its subcellular location is the nucleus. As accessory component of the DNA polymerase epsilon (DNA polymerase II) participates in chromosomal DNA replication. This chain is DNA polymerase epsilon subunit B (DPB2), found in Yarrowia lipolytica (strain CLIB 122 / E 150) (Yeast).